A 463-amino-acid chain; its full sequence is Rubisco accumulation factor 1, chloroplastic (463 aa).

The span at 1–18 shows a compositional bias: low complexity; sequence MLSLSHPHPHPAASTTAP. Residues 1-31 constitute a chloroplast transit peptide; sequence MLSLSHPHPHPAASTTAPRHQRTAPVWHRRR. A disordered region spans residues 1–84; the sequence is MLSLSHPHPH…PFHPPPSPLP (84 aa). Residues 19–33 are compositionally biased toward basic residues; that stretch reads RHQRTAPVWHRRRAS. Over residues 43–53 the composition is skewed to gly residues; the sequence is PGGGSTGGRGG. The N-terminal alpha-helix stretch occupies residues 83–275; sequence LPPSLRNLDL…SGRARVELEL (193 aa). Positions 240 to 294 form a coiled coil; that stretch reads RQSREAIDVQDRVAELERALQVVETESGRARVELELERARRKAAGEEEVDEEGEE. A C-terminal beta sheet region spans residues 305 to 450; sequence VTVVRLRYGE…AEVVIVVRPP (146 aa).

Belongs to the RAF family. Homotrimer. Expressed in bundle sheath.

The protein localises to the plastid. It is found in the chloroplast. Its function is as follows. Required for assembly or stability of RuBisCO. Acts at a postchaperonin step to fold and/or assemble the large subunit (LS) into RuBisCO. This Zea mays (Maize) protein is Rubisco accumulation factor 1, chloroplastic.